The following is a 1822-amino-acid chain: Sperm flagellar protein 2 (1822 aa).

The region spanning 1-105 (MSEILCQWLN…LLYQLYIALQ (105 aa)) is the Calponin-homology (CH) domain. Coiled coils occupy residues 227-260 (KALE…KDLQ), 321-396 (AHEA…KQAK), 732-758 (NQAQ…KAQK), and 871-909 (CEKV…LAEL). 4 disordered regions span residues 896–1004 (KEAE…VPQP), 1278–1327 (EEEK…EATP), 1664–1718 (SIPS…NNEK), and 1803–1822 (EHVQ…EEKK). The span at 911–920 (LPTPPPAPPP) shows a compositional bias: pro residues. Basic and acidic residues-rich tracts occupy residues 921-930 (EPEKEKEIHQ) and 949-968 (PHGK…ETAL). Positions 975 to 987 (KGKSSGGKVPVKK) are enriched in low complexity. Composition is skewed to basic and acidic residues over residues 1278-1292 (EEEK…KEKS) and 1303-1314 (KEPPKKKQEDKK). Residues 1324 to 1676 (EATPVIVTTE…SAEKTSSTDA (353 aa)) are interaction with IFT20. Residues 1686 to 1712 (EENAAREERKLKDDTEKREQKDEEIPE) are a coiled coil. Positions 1688–1708 (NAAREERKLKDDTEKREQKDE) are enriched in basic and acidic residues.

As to quaternary structure, interacts (via C-terminus) with IFT20. Interacts with DYNC1I2.

The protein localises to the cell projection. It is found in the cilium. Its subcellular location is the flagellum. The protein resides in the cytoplasm. It localises to the golgi apparatus. In terms of biological role, required for correct axoneme development in spermatozoa. Important for normal development of the manchette and sperm head morphology. Essential for male fertility. Plays a role in localization of the intraflagellar transport protein IFT20 to the manchette, suggesting function as an adapter for dynein-mediated protein transport during spermatogenesis. Also plays a role in bone growth where it seems to be required for normal osteoblast differentiation. The sequence is that of Sperm flagellar protein 2 (SPEF2) from Homo sapiens (Human).